A 223-amino-acid chain; its full sequence is Sigma non-opioid intracellular receptor 1 (223 aa).

Over 1–9 (MQWAAGRRW) the chain is Lumenal. The interval 2–8 (QWAAGRR) is targeting to endoplasmic reticulum-associated lipid droplets. Residues 10-30 (AWITLFLTIVAVLIQAVWLWL) form a helical membrane-spanning segment. Topologically, residues 31-223 (GTQSFVFQRE…LTTYLFGQDS (193 aa)) are cytoplasmic. Positions 99 to 106 (SLSEYVLL) are important for ligand-binding. The interval 177-223 (VIPSTLAFALSDTIFSTQDFLTLFYTLRAYARGLRLELTTYLFGQDS) is C-terminal hydrophobic region.

It belongs to the ERG2 family. Homotrimer. Forms a ternary complex with ANK2 and ITPR3. The complex is disrupted by agonists. Interacts with KCNA4. Interacts with KCNA2; cocaine consumption leads to increased interaction. Interacts with RNF112 in an oxidative stress-regulated manner.

The protein localises to the nucleus inner membrane. It localises to the nucleus outer membrane. It is found in the nucleus envelope. Its subcellular location is the cytoplasmic vesicle. The protein resides in the endoplasmic reticulum membrane. The protein localises to the membrane. It localises to the lipid droplet. It is found in the cell junction. Its subcellular location is the cell membrane. The protein resides in the cell projection. The protein localises to the growth cone. It localises to the postsynaptic density membrane. Its function is as follows. Functions in lipid transport from the endoplasmic reticulum and is involved in a wide array of cellular functions probably through regulation of the biogenesis of lipid microdomains at the plasma membrane. Involved in the regulation of different receptors it plays a role in BDNF signaling and EGF signaling. Also regulates ion channels like the potassium channel and could modulate neurotransmitter release. Plays a role in calcium signaling through modulation together with ANK2 of the ITP3R-dependent calcium efflux at the endoplasmic reticulum. Plays a role in several other cell functions including proliferation, survival and death. Originally identified for its ability to bind various psychoactive drugs it is involved in learning processes, memory and mood alteration. Necessary for proper mitochondrial axonal transport in motor neurons, in particular the retrograde movement of mitochondria. Plays a role in protecting cells against oxidative stress-induced cell death via its interaction with RNF112. The sequence is that of Sigma non-opioid intracellular receptor 1 (SIGMAR1) from Trichosurus vulpecula (Brush-tailed possum).